We begin with the raw amino-acid sequence, 591 residues long: Aspartate--tRNA ligase (591 aa).

Residue Glu-173 coordinates L-aspartate. The interval 197 to 200 (QLFK) is aspartate. Arg-219 contacts L-aspartate. ATP is bound by residues 219–221 (RDE) and Gln-228. Residue His-448 participates in L-aspartate binding. Glu-482 serves as a coordination point for ATP. Position 489 (Arg-489) interacts with L-aspartate. Residue 534–537 (GLDR) participates in ATP binding.

This sequence belongs to the class-II aminoacyl-tRNA synthetase family. Type 1 subfamily. In terms of assembly, homodimer.

Its subcellular location is the cytoplasm. It catalyses the reaction tRNA(Asp) + L-aspartate + ATP = L-aspartyl-tRNA(Asp) + AMP + diphosphate. Functionally, catalyzes the attachment of L-aspartate to tRNA(Asp) in a two-step reaction: L-aspartate is first activated by ATP to form Asp-AMP and then transferred to the acceptor end of tRNA(Asp). The polypeptide is Aspartate--tRNA ligase (Shewanella oneidensis (strain ATCC 700550 / JCM 31522 / CIP 106686 / LMG 19005 / NCIMB 14063 / MR-1)).